The following is a 269-amino-acid chain: UPF0162 protein bbp_163 (269 aa).

This sequence belongs to the UPF0162 family.

This Buchnera aphidicola subsp. Baizongia pistaciae (strain Bp) protein is UPF0162 protein bbp_163.